Reading from the N-terminus, the 232-residue chain is 7-cyano-7-deazaguanine synthase (232 aa).

Phe-8–Leu-18 is a binding site for ATP. Zn(2+)-binding residues include Cys-187, Cys-196, Cys-199, and Cys-202.

Belongs to the QueC family. Zn(2+) is required as a cofactor.

The enzyme catalyses 7-carboxy-7-deazaguanine + NH4(+) + ATP = 7-cyano-7-deazaguanine + ADP + phosphate + H2O + H(+). The protein operates within purine metabolism; 7-cyano-7-deazaguanine biosynthesis. Catalyzes the ATP-dependent conversion of 7-carboxy-7-deazaguanine (CDG) to 7-cyano-7-deazaguanine (preQ(0)). The sequence is that of 7-cyano-7-deazaguanine synthase from Shewanella denitrificans (strain OS217 / ATCC BAA-1090 / DSM 15013).